A 158-amino-acid chain; its full sequence is Crossover junction endodeoxyribonuclease RuvC (158 aa).

Catalysis depends on residues aspartate 7, glutamate 66, and aspartate 139. Mg(2+)-binding residues include aspartate 7, glutamate 66, and aspartate 139.

Belongs to the RuvC family. As to quaternary structure, homodimer which binds Holliday junction (HJ) DNA. The HJ becomes 2-fold symmetrical on binding to RuvC with unstacked arms; it has a different conformation from HJ DNA in complex with RuvA. In the full resolvosome a probable DNA-RuvA(4)-RuvB(12)-RuvC(2) complex forms which resolves the HJ. It depends on Mg(2+) as a cofactor.

The protein resides in the cytoplasm. The catalysed reaction is Endonucleolytic cleavage at a junction such as a reciprocal single-stranded crossover between two homologous DNA duplexes (Holliday junction).. Its function is as follows. The RuvA-RuvB-RuvC complex processes Holliday junction (HJ) DNA during genetic recombination and DNA repair. Endonuclease that resolves HJ intermediates. Cleaves cruciform DNA by making single-stranded nicks across the HJ at symmetrical positions within the homologous arms, yielding a 5'-phosphate and a 3'-hydroxyl group; requires a central core of homology in the junction. The consensus cleavage sequence is 5'-(A/T)TT(C/G)-3'. Cleavage occurs on the 3'-side of the TT dinucleotide at the point of strand exchange. HJ branch migration catalyzed by RuvA-RuvB allows RuvC to scan DNA until it finds its consensus sequence, where it cleaves and resolves the cruciform DNA. This Campylobacter jejuni subsp. jejuni serotype O:6 (strain 81116 / NCTC 11828) protein is Crossover junction endodeoxyribonuclease RuvC.